The sequence spans 148 residues: Large ribosomal subunit protein uL15 (148 aa).

Residues 1 to 11 are compositionally biased toward basic and acidic residues; sequence MSEPIKLHDLR. Positions 1-52 are disordered; sequence MSEPIKLHDLRPAAGSNKAKTRVGRGEASKGKTAGRGTKGTKARKQVSAAFE.

Belongs to the universal ribosomal protein uL15 family. In terms of assembly, part of the 50S ribosomal subunit.

Its function is as follows. Binds to the 23S rRNA. In Corynebacterium glutamicum (strain R), this protein is Large ribosomal subunit protein uL15.